A 292-amino-acid polypeptide reads, in one-letter code: Imipenem-hydrolyzing beta-lactamase (292 aa).

The N-terminal stretch at 1-27 is a signal peptide; that stretch reads MSLNVKQSRIAILFSSCLISISFFSQA. The cysteines at positions 70 and 240 are disulfide-linked. The Acyl-ester intermediate role is filled by Ser71. 236-238 is a substrate binding site; the sequence is KTG.

This sequence belongs to the class-A beta-lactamase family.

It catalyses the reaction a beta-lactam + H2O = a substituted beta-amino acid. Hydrolyzes carbapenems such as imipenem, which are extended-spectrum beta-lactam antibiotics. The polypeptide is Imipenem-hydrolyzing beta-lactamase (nmcA) (Enterobacter cloacae).